The primary structure comprises 865 residues: Protein translocase subunit SecA (865 aa).

ATP-binding positions include glutamine 85, 103 to 107 (GEGKT), and aspartate 505. Residues cysteine 847, cysteine 849, cysteine 858, and histidine 859 each coordinate Zn(2+).

This sequence belongs to the SecA family. In terms of assembly, monomer and homodimer. Part of the essential Sec protein translocation apparatus which comprises SecA, SecYEG and auxiliary proteins SecDF. Other proteins may also be involved. Zn(2+) is required as a cofactor.

It is found in the cell membrane. The protein resides in the cytoplasm. It carries out the reaction ATP + H2O + cellular proteinSide 1 = ADP + phosphate + cellular proteinSide 2.. Its function is as follows. Part of the Sec protein translocase complex. Interacts with the SecYEG preprotein conducting channel. Has a central role in coupling the hydrolysis of ATP to the transfer of proteins into and across the cell membrane, serving as an ATP-driven molecular motor driving the stepwise translocation of polypeptide chains across the membrane. The chain is Protein translocase subunit SecA from Lactococcus lactis subsp. cremoris (strain SK11).